A 248-amino-acid chain; its full sequence is Probable transcriptional regulatory protein Mchl_0946 (248 aa).

The protein belongs to the TACO1 family.

It localises to the cytoplasm. The protein is Probable transcriptional regulatory protein Mchl_0946 of Methylorubrum extorquens (strain CM4 / NCIMB 13688) (Methylobacterium extorquens).